The following is a 396-amino-acid chain: Digeranylgeranylglycerophospholipid reductase (396 aa).

Residues Gly14, Glu33, Cys44, Gly45, Gly47, Arg100, Ala124, Glu162, Asp283, Gly295, and Ile296 each coordinate FAD. A 2,3-bis-O-(geranylgeranyl)-sn-glycerol 1-phospholipid contacts are provided by Lys338 and Val374.

This sequence belongs to the geranylgeranyl reductase family. DGGGPL reductase subfamily. As to quaternary structure, monomer. The cofactor is FAD.

It localises to the cell membrane. The catalysed reaction is 2,3-bis-O-(phytanyl)-sn-glycerol 1-phosphate + 8 NADP(+) = 2,3-bis-O-(geranylgeranyl)-sn-glycerol 1-phosphate + 8 NADPH + 8 H(+). It catalyses the reaction 2,3-bis-O-(phytanyl)-sn-glycerol 1-phosphate + 8 NAD(+) = 2,3-bis-O-(geranylgeranyl)-sn-glycerol 1-phosphate + 8 NADH + 8 H(+). It carries out the reaction a 2,3-bis-O-phytanyl-sn-glycerol 1-phospholipid + 8 A = a 2,3-bis-O-(geranylgeranyl)-sn-glycerol 1-phospholipid + 8 AH2. The enzyme catalyses CDP-2,3-bis-O-(geranylgeranyl)-sn-glycerol + 8 AH2 = CDP-2,3-bis-O-(phytanyl)-sn-glycerol + 8 A. The catalysed reaction is archaetidylserine + 8 AH2 = 2,3-bis-O-phytanyl-sn-glycero-3-phospho-L-serine + 8 A. The protein operates within membrane lipid metabolism; glycerophospholipid metabolism. Its function is as follows. Is involved in the reduction of 2,3-digeranylgeranylglycerophospholipids (unsaturated archaeols) into 2,3-diphytanylglycerophospholipids (saturated archaeols) in the biosynthesis of archaeal membrane lipids. Catalyzes the formation of archaetidic acid (2,3-di-O-phytanyl-sn-glyceryl phosphate) from 2,3-di-O-geranylgeranylglyceryl phosphate (DGGGP) via the hydrogenation of each double bond of the isoprenoid chains. Can use both NADH and NADPH as electron donors. Also catalyzes the reduction of 2,3-di-O-geranylgeranylglyceryl phosphate analogs such as 2,3-di-O-phytyl-sn-glyceryl phosphate (DPHGP), 3-O-(2,3-di-O-phytyl-sn-glycero-phospho)-sn-glycerol (DPHGPG) and 2,3-di-O-phytyl-sn-glycero-phosphoethanolamine (DPHGPE). Is not active toward 2,3-di-O-geranylgeranylglycerol. Is also probably able to reduce double bonds of geranyl groups in CDP-2,3-bis-O-(geranylgeranyl)-sn-glycerol and archaetidylserine, thus acting at various stages in the biosynthesis of archaeal membrane lipids. This is Digeranylgeranylglycerophospholipid reductase from Thermoplasma acidophilum (strain ATCC 25905 / DSM 1728 / JCM 9062 / NBRC 15155 / AMRC-C165).